A 314-amino-acid polypeptide reads, in one-letter code: Dihydroorotate dehydrogenase (fumarate) (314 aa).

Substrate-binding positions include Lys46, 70-74 (NSMGL), and Asn130. An FMN-binding site is contributed by 46 to 47 (KS). Position 130 (Asn130) interacts with FMN. Active-site nucleophile residues include Ser132 and Cys133. FMN contacts are provided by Lys167 and Ile195. A substrate-binding site is contributed by 196–197 (NS). FMN is bound by residues Gly224, 252-253 (GG), and 274-275 (GT).

Belongs to the dihydroorotate dehydrogenase family. Type 1 subfamily. In terms of assembly, homodimer. Requires FMN as cofactor.

The protein localises to the cytoplasm. It catalyses the reaction (S)-dihydroorotate + fumarate = orotate + succinate. The protein operates within pyrimidine metabolism; UMP biosynthesis via de novo pathway. Catalyzes the conversion of dihydroorotate to orotate with fumarate as the electron acceptor. This is Dihydroorotate dehydrogenase (fumarate) (URA1) from Saccharomyces bayanus (Yeast).